We begin with the raw amino-acid sequence, 409 residues long: 4-hydroxy-3-methylbut-2-en-1-yl diphosphate synthase (flavodoxin) (409 aa).

Residues cysteine 298, cysteine 301, cysteine 344, and glutamate 351 each coordinate [4Fe-4S] cluster.

It belongs to the IspG family. The cofactor is [4Fe-4S] cluster.

The enzyme catalyses (2E)-4-hydroxy-3-methylbut-2-enyl diphosphate + oxidized [flavodoxin] + H2O + 2 H(+) = 2-C-methyl-D-erythritol 2,4-cyclic diphosphate + reduced [flavodoxin]. It functions in the pathway isoprenoid biosynthesis; isopentenyl diphosphate biosynthesis via DXP pathway; isopentenyl diphosphate from 1-deoxy-D-xylulose 5-phosphate: step 5/6. Its function is as follows. Converts 2C-methyl-D-erythritol 2,4-cyclodiphosphate (ME-2,4cPP) into 1-hydroxy-2-methyl-2-(E)-butenyl 4-diphosphate. This is 4-hydroxy-3-methylbut-2-en-1-yl diphosphate synthase (flavodoxin) from Dechloromonas aromatica (strain RCB).